The sequence spans 1191 residues: WASH complex subunit homolog 5 (1191 aa).

Belongs to the strumpellin family. In terms of assembly, component of the WASH complex.

The protein resides in the early endosome. Functionally, acts at least in part as component of the WASH complex which may regulate wash nucleation-promoting factor (NPF) activity and is required for its membrane targeting during endosomal sorting. During embryogenesis, not involved in the wash-dependent developmental migration of hemocytes anteriorly from the tail. The sequence is that of WASH complex subunit homolog 5 from Drosophila melanogaster (Fruit fly).